The primary structure comprises 96 residues: Small ribosomal subunit protein bS6 (96 aa).

Belongs to the bacterial ribosomal protein bS6 family.

Its function is as follows. Binds together with bS18 to 16S ribosomal RNA. The protein is Small ribosomal subunit protein bS6 of Streptococcus pneumoniae serotype 2 (strain D39 / NCTC 7466).